The following is a 686-amino-acid chain: Probable ferric reductase transmembrane component (686 aa).

7 helical membrane-spanning segments follow: residues 23 to 43 (LSGWASLALALGLVCVVVPVV), 79 to 99 (TLWLALLWCMLGGACAVVGSA), 111 to 131 (VAAAFMPALFLLTLRPSPLPY), 147 to 167 (VVVLQATVHSALYTWYFATSG), 178 to 198 (WMGAVALLAFVLIAATSLPAV), 205 to 225 (TFYYVHYVGTWVSVLAVHVHS), and 256 to 276 (VTVVPISTSLALLEFPLADLV). The Ferric oxidoreductase domain maps to 108–666 (LGRVAAAFMP…LAAGPQALVE (559 aa)). 308–314 (HPFTVAS) is a binding site for FAD. Residues 392–412 (LMVVGGSAISFGLPFLRILNF) form a helical membrane-spanning segment. 431–439 (ILSQFRSNF) provides a ligand contact to NAD(+). N-linked (GlcNAc...) asparagine glycans are attached at residues N506 and N644.

The cofactor is FAD.

Its subcellular location is the membrane. It catalyses the reaction 2 a Fe(II)-siderophore + NAD(+) + H(+) = 2 a Fe(III)-siderophore + NADH. Functionally, is required for the uptake of Fe(3+) ions. May participate in the transport of electrons from cytoplasm to an extracellular substrate (Fe(3+) ion) via FAD and heme intermediates. Involved in iron homeostasis. The sequence is that of Probable ferric reductase transmembrane component (FRE8) from Eremothecium gossypii (strain ATCC 10895 / CBS 109.51 / FGSC 9923 / NRRL Y-1056) (Yeast).